Here is a 175-residue protein sequence, read N- to C-terminus: Ferritin light chain (175 aa).

The residue at position 2 (Ser-2) is an N-acetylserine. The 150-residue stretch at Gln-7 to Ser-156 folds into the Ferritin-like diiron domain. 5 residues coordinate Fe cation: Glu-54, Glu-57, Glu-58, Glu-61, and Glu-64.

It belongs to the ferritin family. In terms of assembly, oligomer of 24 subunits. There are two types of subunits: L (light) chain and H (heavy) chain. The major chain can be light or heavy, depending on the species and tissue type. The functional molecule forms a roughly spherical shell with a diameter of 12 nm and contains a central cavity into which the insoluble mineral iron core is deposited. Interacts with NCOA4.

Its subcellular location is the cytoplasmic vesicle. It is found in the autophagosome. The protein resides in the cytoplasm. The protein localises to the autolysosome. Stores iron in a soluble, non-toxic, readily available form. Important for iron homeostasis. Iron is taken up in the ferrous form and deposited as ferric hydroxides after oxidation. Also plays a role in delivery of iron to cells. Mediates iron uptake in capsule cells of the developing kidney. Delivery to lysosomes by the cargo receptor NCOA4 for autophagic degradation and release or iron. The polypeptide is Ferritin light chain (FTL) (Felis catus (Cat)).